The primary structure comprises 827 residues: Lon protease (827 aa).

The tract at residues 1-27 (MNDETLREQTTAESEETSPTTPSPEPE) is disordered. Positions 32 to 225 (LPLIPLEGAV…KVLMFYRKQF (194 aa)) constitute a Lon N-terminal domain. An ATP-binding site is contributed by 385–392 (GPPGVGKT). Residues 625–806 (IDQPGVAIGL…DEVLSIALLP (182 aa)) form the Lon proteolytic domain. Active-site residues include serine 712 and lysine 755.

This sequence belongs to the peptidase S16 family. As to quaternary structure, homohexamer. Organized in a ring with a central cavity.

It localises to the cytoplasm. It carries out the reaction Hydrolysis of proteins in presence of ATP.. In terms of biological role, ATP-dependent serine protease that mediates the selective degradation of mutant and abnormal proteins as well as certain short-lived regulatory proteins. Required for cellular homeostasis and for survival from DNA damage and developmental changes induced by stress. Degrades polypeptides processively to yield small peptide fragments that are 5 to 10 amino acids long. Binds to DNA in a double-stranded, site-specific manner. The protein is Lon protease of Chloroflexus aurantiacus (strain ATCC 29366 / DSM 635 / J-10-fl).